We begin with the raw amino-acid sequence, 273 residues long: Type III pantothenate kinase (273 aa).

Aspartate 5–valine 12 is a binding site for ATP. Residue glycine 112–leucine 115 coordinates substrate. Residue aspartate 114 is the Proton acceptor of the active site. Aspartate 134 contacts K(+). ATP is bound at residue threonine 137. Residue threonine 189 participates in substrate binding.

The protein belongs to the type III pantothenate kinase family. As to quaternary structure, homodimer. NH4(+) is required as a cofactor. It depends on K(+) as a cofactor.

Its subcellular location is the cytoplasm. It catalyses the reaction (R)-pantothenate + ATP = (R)-4'-phosphopantothenate + ADP + H(+). Its pathway is cofactor biosynthesis; coenzyme A biosynthesis; CoA from (R)-pantothenate: step 1/5. In terms of biological role, catalyzes the phosphorylation of pantothenate (Pan), the first step in CoA biosynthesis. The sequence is that of Type III pantothenate kinase from Treponema pallidum subsp. pallidum (strain SS14).